Consider the following 54-residue polypeptide: UPF0057 membrane protein ssr1169 (54 aa).

A run of 2 helical transmembrane segments spans residues 3 to 23 (IVKI…QVGI) and 31 to 51 (LLLT…WVIA).

This sequence belongs to the UPF0057 (PMP3) family.

It is found in the cell membrane. This Synechocystis sp. (strain ATCC 27184 / PCC 6803 / Kazusa) protein is UPF0057 membrane protein ssr1169.